We begin with the raw amino-acid sequence, 176 residues long: Ribosome maturation factor RimM (176 aa).

One can recognise a PRC barrel domain in the interval E104 to I176.

It belongs to the RimM family. In terms of assembly, binds ribosomal protein uS19.

Its subcellular location is the cytoplasm. An accessory protein needed during the final step in the assembly of 30S ribosomal subunit, possibly for assembly of the head region. Essential for efficient processing of 16S rRNA. May be needed both before and after RbfA during the maturation of 16S rRNA. It has affinity for free ribosomal 30S subunits but not for 70S ribosomes. The polypeptide is Ribosome maturation factor RimM (Thermotoga maritima (strain ATCC 43589 / DSM 3109 / JCM 10099 / NBRC 100826 / MSB8)).